Consider the following 76-residue polypeptide: MIYKVFYQETKERSPRRENTQALYLDIDAASELEGRIKARKMVEEHTDYNVEFIELLSDKHLDYEKETGVFELTEF.

This sequence belongs to the RNA polymerase subunit epsilon family. In terms of assembly, RNAP is composed of a core of 2 alpha, a beta and a beta' subunit. The core is associated with a delta subunit, and at least one of epsilon or omega. When a sigma factor is associated with the core the holoenzyme is formed, which can initiate transcription.

The catalysed reaction is RNA(n) + a ribonucleoside 5'-triphosphate = RNA(n+1) + diphosphate. Functionally, a non-essential component of RNA polymerase (RNAP). The protein is DNA-directed RNA polymerase subunit epsilon of Streptococcus equi subsp. zooepidemicus (strain H70).